We begin with the raw amino-acid sequence, 214 residues long: Cytochrome c biogenesis ATP-binding export protein CcmA (214 aa).

Positions 12–214 constitute an ABC transporter domain; that stretch reads LAAHALAFSR…TRMLTLEAAA (203 aa). 44–51 is a binding site for ATP; that stretch reads GDNGAGKT.

This sequence belongs to the ABC transporter superfamily. CcmA exporter (TC 3.A.1.107) family. The complex is composed of two ATP-binding proteins (CcmA) and two transmembrane proteins (CcmB).

It localises to the cell inner membrane. It carries out the reaction heme b(in) + ATP + H2O = heme b(out) + ADP + phosphate + H(+). Its function is as follows. Part of the ABC transporter complex CcmAB involved in the biogenesis of c-type cytochromes; once thought to export heme, this seems not to be the case, but its exact role is uncertain. Responsible for energy coupling to the transport system. The protein is Cytochrome c biogenesis ATP-binding export protein CcmA of Xanthomonas oryzae pv. oryzae (strain MAFF 311018).